A 151-amino-acid chain; its full sequence is Arginine repressor (151 aa).

Belongs to the ArgR family.

It is found in the cytoplasm. It participates in amino-acid biosynthesis; L-arginine biosynthesis [regulation]. Its function is as follows. Regulates arginine biosynthesis genes. The chain is Arginine repressor from Haemophilus influenzae (strain PittGG).